The sequence spans 667 residues: UvrABC system protein B (667 aa).

A Helicase ATP-binding domain is found at 25–180 (DSLQNQHRFQ…LLRALVSVQY (156 aa)). 38 to 45 (GATGTGKT) is a binding site for ATP. Residues 91-114 (YYDYYQPEAYIPVSDTYIEKSSSI) carry the Beta-hairpin motif. A Helicase C-terminal domain is found at 429 to 595 (QVDDLLGEIK…PIVKRSSNSI (167 aa)). The UVR domain maps to 626-661 (PELIQQLEAQMKEAAKNLEFESAAKYRDRIKQLRDK).

It belongs to the UvrB family. As to quaternary structure, forms a heterotetramer with UvrA during the search for lesions. Interacts with UvrC in an incision complex.

The protein localises to the cytoplasm. Its function is as follows. The UvrABC repair system catalyzes the recognition and processing of DNA lesions. A damage recognition complex composed of 2 UvrA and 2 UvrB subunits scans DNA for abnormalities. Upon binding of the UvrA(2)B(2) complex to a putative damaged site, the DNA wraps around one UvrB monomer. DNA wrap is dependent on ATP binding by UvrB and probably causes local melting of the DNA helix, facilitating insertion of UvrB beta-hairpin between the DNA strands. Then UvrB probes one DNA strand for the presence of a lesion. If a lesion is found the UvrA subunits dissociate and the UvrB-DNA preincision complex is formed. This complex is subsequently bound by UvrC and the second UvrB is released. If no lesion is found, the DNA wraps around the other UvrB subunit that will check the other stand for damage. The sequence is that of UvrABC system protein B from Microcystis aeruginosa (strain NIES-843 / IAM M-2473).